A 348-amino-acid polypeptide reads, in one-letter code: Uroporphyrinogen decarboxylase (348 aa).

Substrate is bound by residues 27 to 31 (RQAGR), phenylalanine 46, aspartate 76, tyrosine 152, serine 207, and histidine 320.

It belongs to the uroporphyrinogen decarboxylase family. Homodimer.

The protein localises to the cytoplasm. It catalyses the reaction uroporphyrinogen III + 4 H(+) = coproporphyrinogen III + 4 CO2. Its pathway is porphyrin-containing compound metabolism; protoporphyrin-IX biosynthesis; coproporphyrinogen-III from 5-aminolevulinate: step 4/4. In terms of biological role, catalyzes the decarboxylation of four acetate groups of uroporphyrinogen-III to yield coproporphyrinogen-III. In Bacillus anthracis, this protein is Uroporphyrinogen decarboxylase.